The following is a 239-amino-acid chain: uncharacterized protein (239 aa).

The next 8 helical transmembrane spans lie at 4–24, 29–49, 61–81, 84–104, 116–136, 139–159, 180–200, and 218–238; these read LIPK…LGMV, VIWH…VYPV, YQKW…ISVF, PPLI…MYFA, VAGV…GMGT, GWAW…SFYV, LLLP…AFIP, and IGIL…LFIT.

This sequence to H.influenzae HI_1626.

Its subcellular location is the cell membrane. This is an uncharacterized protein from Bacillus subtilis (strain 168).